The sequence spans 243 residues: 6-carboxyhexanoate--CoA ligase (243 aa).

It belongs to the BioW family. Homodimer. The cofactor is Mg(2+).

The catalysed reaction is heptanedioate + ATP + CoA = 6-carboxyhexanoyl-CoA + AMP + diphosphate. The protein operates within metabolic intermediate metabolism; pimeloyl-CoA biosynthesis; pimeloyl-CoA from pimelate: step 1/1. Its function is as follows. Catalyzes the transformation of pimelate into pimeloyl-CoA with concomitant hydrolysis of ATP to AMP. The polypeptide is 6-carboxyhexanoate--CoA ligase (Thermocrinis albus (strain DSM 14484 / JCM 11386 / HI 11/12)).